A 304-amino-acid chain; its full sequence is E3 ubiquitin-protein ligase CHIP (304 aa).

The segment covering 1-10 (MKGKEEKEGG) has biased composition (basic and acidic residues). The interval 1-30 (MKGKEEKEGGARLGTGGGGSPDKSPSAQEL) is disordered. Residue Lys-2 forms a Glycyl lysine isopeptide (Lys-Gly) (interchain with G-Cter in ubiquitin) linkage. Gly residues predominate over residues 11–20 (ARLGTGGGGS). Residue Ser-20 is modified to Phosphoserine. Residue Lys-23 forms a Glycyl lysine isopeptide (Lys-Gly) (interchain with G-Cter in ubiquitin) linkage. 2 positions are modified to phosphoserine: Ser-24 and Ser-26. TPR repeat units lie at residues 27–60 (AQELKEQGNRLFVGRKYPEAAACYGRAITRNPLV), 61–94 (AVYYTNRALCYLKMQQPEQALADCRRALELDGQS), and 96–128 (KAHFFLGQCQLEMESYDEAIANLQRAYSLAKEQ). The tract at residues 102–201 (GQCQLEMESY…GHIRAQQACI (100 aa)) is required for interaction with MAPK7. The tract at residues 143 to 197 (AKKKRWNSIEERRIHQESELHSYLTRLIAAERERELEECQRNHEGDEDDGHIRAQ) is required for interaction with and ubiquitination of MYOCD. Residues 144 to 198 (KKKRWNSIEERRIHQESELHSYLTRLIAAERERELEECQRNHEGDEDDGHIRAQQ) are required for interaction with FOXO1. Residues 144–304 (KKKRWNSIEE…ISENGWVEDY (161 aa)) are required for ubiquitination of FOXO1. Phosphoserine is present on Ser-150. Residues Lys-222 and Lys-256 each participate in a glycyl lysine isopeptide (Lys-Gly) (interchain with G-Cter in ubiquitin) cross-link. A U-box domain is found at 227–301 (DIPDYLCGKI…DAFISENGWV (75 aa)). Ser-274 is subject to Phosphoserine.

As to quaternary structure, homodimer. Interacts with BAG2, and with the E2 ubiquitin conjugating enzymes UBE2D1, UBE2D2 and UBE2D3. Detected in a ternary complex containing STUB1, HSPA1A and HSPBP1. Part of a complex composed of STUB1/CHIP, VCP/p97, CHRNA3, and UBXN2A that modulates the ubiquitination and endoplasmic reticulum-associated degradation (ERAD) of CHRNA3. Within the complex UBXN2A acts as a scaffold protein required for the interaction of CHRNA3 with VCP/p97, this interaction also inhibits CHRNA3 ubiquitination by STUB1/CHIP and subsequently ERAD. Interacts with MKKS. Interacts with DNAAF4. Interacts (via the U-box domain) with the UBE2V2-UBE2N heterodimer; the complex has a specific 'Lys-63'-linked polyubiquitination activity. Interacts (when monoubiquitinated) with ATXN3. Interacts with UBE2W. Interacts with DNAJB6. Interacts with FLCN and HSP90AA1. Interacts with HSP90. Interacts with UBE2N and UBE2V1. Interacts (via TPR repeats) with HSPA8 (via C-terminus). Interacts (via TPR repeats) with HSPA1A (via C-terminus). Interacts with the non-acetylated form of HSPA1A and HSPA1B. Interacts with SMAD3 and HSP90AB1. Interacts with UBE4B. Interacts with PRMT5. Interacts with MYOCD (via C-terminus). Interacts with FOXO1 (when phosphorylated on 'Ser-250'). Interacts with MAPK7/ERK5; the interaction is enhanced in the presence of IGF1 or MAP2K5 and promotes STUB1/CHIP E3 ligase activity. Interacts with and ubiquitinates ESR1; the interaction is promoted in the absence of estradiol (17-beta-estradiol/E2). Interacts with ESR2. Interacts with and ubiquitinates NFATC3; HSPA1A/HSP70 is required as a co-chaperone. In macrophages, interacts with PAQR3; the interaction promotes PPARG poylubiquitination and STUB1-mediated degradation. Component of the chaperone-assisted selective autophagy (CASA) complex consisting of BAG3, HSPA8/HSC70, HSPB8 and STUB1/CHIP. Auto-ubiquitinated; mediated by UBE2D1 and UBE2D2 and enhanced in the presence of MAP2K5. Monoubiquitinated at Lys-2 following cell stress by UBE2W, promoting the interaction with ATXN3. As to expression, expressed in the adventitia layer of the carotid artery (at protein level). Expressed in the CA1 region of the hippocampus (at protein level). Expressed in the uterus (at protein level).

It localises to the cytoplasm. The protein resides in the nucleus. It is found in the mitochondrion. The enzyme catalyses S-ubiquitinyl-[E2 ubiquitin-conjugating enzyme]-L-cysteine + [acceptor protein]-L-lysine = [E2 ubiquitin-conjugating enzyme]-L-cysteine + N(6)-ubiquitinyl-[acceptor protein]-L-lysine.. It functions in the pathway protein modification; protein ubiquitination. E3 ubiquitin-protein ligase which targets misfolded chaperone substrates towards proteasomal degradation. Plays a role in the maintenance of mitochondrial morphology and promotes mitophagic removal of dysfunctional mitochondria; thereby acts as a protector against apoptosis in response to cellular stress. Negatively regulates vascular smooth muscle contraction, via degradation of the transcriptional activator MYOCD and subsequent loss of transcription of genes involved in vascular smooth muscle contraction. Promotes survival and proliferation of cardiac smooth muscle cells via ubiquitination and degradation of FOXO1, resulting in subsequent repression of FOXO1-mediated transcription of pro-apoptotic genes. Ubiquitinates ICER-type isoforms of CREM and targets them for proteasomal degradation, thereby acts as a positive effector of MAPK/ERK-mediated inhibition of apoptosis in cardiomyocytes. Inhibits lipopolysaccharide-induced apoptosis and hypertrophy in cardiomyocytes, via ubiquitination and subsequent proteasomal degradation of NFATC3. Collaborates with ATXN3 in the degradation of misfolded chaperone substrates: ATXN3 restricting the length of ubiquitin chain attached to STUB1/CHIP substrates and preventing further chain extension. Ubiquitinates NOS1 in concert with Hsp70 and Hsp40. Modulates the activity of several chaperone complexes, including Hsp70, Hsc70 and Hsp90. Ubiquitinates CHRNA3 targeting it for endoplasmic reticulum-associated degradation in cortical neurons, as part of the STUB1-VCP-UBXN2A complex. Ubiquitinates and promotes ESR1 proteasomal degradation in response to age-related circulating estradiol (17-beta-estradiol/E2) decline, thereby promotes neuronal apoptosis in response to ischemic reperfusion injury. Mediates transfer of non-canonical short ubiquitin chains to HSPA8 that have no effect on HSPA8 degradation. Mediates polyubiquitination of DNA polymerase beta (POLB) at 'Lys-41', 'Lys-61' and 'Lys-81', thereby playing a role in base-excision repair: catalyzes polyubiquitination by amplifying the HUWE1/ARF-BP1-dependent monoubiquitination and leading to POLB-degradation by the proteasome. Mediates polyubiquitination of CYP3A4. Ubiquitinates EPHA2 and may regulate the receptor stability and activity through proteasomal degradation. Acts as a co-chaperone for HSPA1A and HSPA1B chaperone proteins and promotes ubiquitin-mediated protein degradation. Negatively regulates the suppressive function of regulatory T-cells (Treg) during inflammation by mediating the ubiquitination and degradation of FOXP3 in a HSPA1A/B-dependent manner. Catalyzes monoubiquitination of SIRT6, preventing its degradation by the proteasome. Likely mediates polyubiquitination and down-regulates plasma membrane expression of PD-L1/CD274, an immune inhibitory ligand critical for immune tolerance to self and antitumor immunity. Negatively regulates TGF-beta signaling by modulating the basal level of SMAD3 via ubiquitin-mediated degradation. Plays a role in the degradation of TP53. Mediates ubiquitination of RIPK3 leading to its subsequent proteasome-dependent degradation. May regulate myosin assembly in striated muscles together with UBE4B and VCP/p97 by targeting myosin chaperone UNC45B for proteasomal degradation. Ubiquitinates PPARG in macrophages playing a role in M2 macrophages polarization and angiogenesis. The protein is E3 ubiquitin-protein ligase CHIP of Rattus norvegicus (Rat).